The chain runs to 570 residues: Nucleoprotein (570 aa).

Residues 54 to 241 (MRKEKRDDSD…IEPKKSAINI (188 aa)) form a binding site for the cap structure m7GTP region. The Mn(2+) site is built by Asp-390 and Glu-392. Positions 400, 507, 510, and 530 each coordinate Zn(2+). A Mn(2+)-binding site is contributed by Asp-534.

The protein belongs to the arenaviridae nucleocapsid protein family. In terms of assembly, homomultimerizes to form the nucleocapsid. Binds to viral genomic RNA. Interacts with glycoprotein G2. Interacts with protein Z; this interaction probably directs the encapsidated genome to budding sites. Interacts with protein L; this interaction does not interfere with Z-L interaction. Interacts with host IKBKE (via Protein kinase domain); the interaction inhibits IKBKE kinase activity.

The protein localises to the virion. The protein resides in the host cytoplasm. Encapsidates the genome, protecting it from nucleases. The encapsidated genomic RNA is termed the nucleocapsid (NC). Serves as template for viral transcription and replication. The increased presence of protein N in host cell does not seem to trigger the switch from transcription to replication as observed in other negative strain RNA viruses. Through the interaction with host IKBKE, strongly inhibits the phosphorylation and nuclear translocation of host IRF3, a protein involved in interferon activation pathway, leading to the inhibition of interferon-beta and IRF3-dependent promoters activation. Also encodes a functional 3'-5' exoribonuclease that degrades preferentially dsRNA substrates and thereby participates in the suppression of interferon induction. The chain is Nucleoprotein from Mopeia virus (MOPV).